Consider the following 150-residue polypeptide: Small ribosomal subunit protein eS19 (150 aa).

Belongs to the eukaryotic ribosomal protein eS19 family. As to quaternary structure, part of the 30S ribosomal subunit.

Functionally, may be involved in maturation of the 30S ribosomal subunit. The chain is Small ribosomal subunit protein eS19 from Thermoplasma acidophilum (strain ATCC 25905 / DSM 1728 / JCM 9062 / NBRC 15155 / AMRC-C165).